The chain runs to 196 residues: ATP-dependent Clp protease proteolytic subunit 1 (196 aa).

Residue serine 96 is the Nucleophile of the active site. Histidine 121 is an active-site residue.

Belongs to the peptidase S14 family. Fourteen ClpP subunits assemble into 2 heptameric rings which stack back to back to give a disk-like structure with a central cavity, resembling the structure of eukaryotic proteasomes.

The protein resides in the cytoplasm. The enzyme catalyses Hydrolysis of proteins to small peptides in the presence of ATP and magnesium. alpha-casein is the usual test substrate. In the absence of ATP, only oligopeptides shorter than five residues are hydrolyzed (such as succinyl-Leu-Tyr-|-NHMec, and Leu-Tyr-Leu-|-Tyr-Trp, in which cleavage of the -Tyr-|-Leu- and -Tyr-|-Trp bonds also occurs).. In terms of biological role, cleaves peptides in various proteins in a process that requires ATP hydrolysis. Has a chymotrypsin-like activity. Plays a major role in the degradation of misfolded proteins. The protein is ATP-dependent Clp protease proteolytic subunit 1 of Prochlorococcus marinus subsp. pastoris (strain CCMP1986 / NIES-2087 / MED4).